The following is a 170-amino-acid chain: Adenine phosphoribosyltransferase (170 aa).

The protein belongs to the purine/pyrimidine phosphoribosyltransferase family. Homodimer.

It localises to the cytoplasm. It catalyses the reaction AMP + diphosphate = 5-phospho-alpha-D-ribose 1-diphosphate + adenine. The protein operates within purine metabolism; AMP biosynthesis via salvage pathway; AMP from adenine: step 1/1. Its function is as follows. Catalyzes a salvage reaction resulting in the formation of AMP, that is energically less costly than de novo synthesis. In Bacillus licheniformis (strain ATCC 14580 / DSM 13 / JCM 2505 / CCUG 7422 / NBRC 12200 / NCIMB 9375 / NCTC 10341 / NRRL NRS-1264 / Gibson 46), this protein is Adenine phosphoribosyltransferase.